The primary structure comprises 224 residues: Ribonuclease T (224 aa).

Positions 20–194 (VVIDVETAGF…YDTERTAELF (175 aa)) constitute an Exonuclease domain. Mg(2+) is bound by residues Asp-23, Glu-25, His-181, and Asp-186. Catalysis depends on His-181, which acts as the Proton donor/acceptor.

The protein belongs to the RNase T family. As to quaternary structure, homodimer. The cofactor is Mg(2+).

Functionally, trims short 3' overhangs of a variety of RNA species, leaving a one or two nucleotide 3' overhang. Responsible for the end-turnover of tRNA: specifically removes the terminal AMP residue from uncharged tRNA (tRNA-C-C-A). Also appears to be involved in tRNA biosynthesis. The protein is Ribonuclease T of Shewanella putrefaciens (strain CN-32 / ATCC BAA-453).